A 470-amino-acid polypeptide reads, in one-letter code: Box C/D snoRNA protein 1 (470 aa).

Positions 1 to 70 (MEFAAENEGK…EEGSGQRPEE (70 aa)) are disordered. Serine 25 bears the Phosphoserine mark. Over residues 41 to 51 (EFGGGEEGTGL) the composition is skewed to gly residues. Residues lysine 79, lysine 108, lysine 118, lysine 138, lysine 143, lysine 153, lysine 162, lysine 173, lysine 183, and lysine 200 each participate in a glycyl lysine isopeptide (Lys-Gly) (interchain with G-Cter in SUMO2) cross-link. The Zn(2+) site is built by cysteine 220, cysteine 223, cysteine 232, cysteine 235, cysteine 240, cysteine 244, histidine 248, and cysteine 254. The HIT-type zinc finger occupies 220 to 254 (CETCGTEEAKYRCPRCMRYSCSLPCVKKHKAELTC). Lysine 459 participates in a covalent cross-link: Glycyl lysine isopeptide (Lys-Gly) (interchain with G-Cter in SUMO2).

This sequence belongs to the BCD1 family. In terms of assembly, interacts with FBL, SNU13, NOP58, NUFIP1, RUVBL1, RUVBL2 and TAF9. Interacts (via HIT-type zinc finger) with the RUVBL1/RUVBL2 complex in the presence of ADP.

In terms of biological role, required for box C/D snoRNAs accumulation involved in snoRNA processing, snoRNA transport to the nucleolus and ribosome biogenesis. This is Box C/D snoRNA protein 1 (ZNHIT6) from Homo sapiens (Human).